We begin with the raw amino-acid sequence, 238 residues long: Probable transcriptional regulatory protein HH_1604 (238 aa).

Belongs to the TACO1 family.

The protein resides in the cytoplasm. The chain is Probable transcriptional regulatory protein HH_1604 from Helicobacter hepaticus (strain ATCC 51449 / 3B1).